The following is a 412-amino-acid chain: 1-deoxy-D-xylulose 5-phosphate reductoisomerase (412 aa).

NADPH-binding residues include Thr10, Gly11, Ser12, Ile13, Gly36, Lys37, Asn38, and Asn130. Lys131 serves as a coordination point for 1-deoxy-D-xylulose 5-phosphate. Residue Glu132 participates in NADPH binding. Asp156 serves as a coordination point for Mn(2+). Ser157, Glu158, Ser194, and His217 together coordinate 1-deoxy-D-xylulose 5-phosphate. Glu158 is a Mn(2+) binding site. NADPH is bound at residue Gly223. The 1-deoxy-D-xylulose 5-phosphate site is built by Ser230, Asn235, Lys236, and Glu239. Glu239 provides a ligand contact to Mn(2+).

This sequence belongs to the DXR family. The cofactor is Mg(2+). It depends on Mn(2+) as a cofactor.

It carries out the reaction 2-C-methyl-D-erythritol 4-phosphate + NADP(+) = 1-deoxy-D-xylulose 5-phosphate + NADPH + H(+). It participates in isoprenoid biosynthesis; isopentenyl diphosphate biosynthesis via DXP pathway; isopentenyl diphosphate from 1-deoxy-D-xylulose 5-phosphate: step 1/6. In terms of biological role, catalyzes the NADPH-dependent rearrangement and reduction of 1-deoxy-D-xylulose-5-phosphate (DXP) to 2-C-methyl-D-erythritol 4-phosphate (MEP). The chain is 1-deoxy-D-xylulose 5-phosphate reductoisomerase from Prochlorococcus marinus (strain NATL1A).